The chain runs to 918 residues: Cell cycle and apoptosis regulator protein 2 (918 aa).

Residues 1 to 35 (MSQFKRQRINPLPGGRNFSGTASTSLLGPPPGLLT) form a disordered region. Phosphothreonine is present on threonine 35. Position 112 is an N6-acetyllysine; by KAT8 (lysine 112). N6-methyllysine is present on lysine 123. Position 124 is a phosphoserine (serine 124). 3 disordered regions span residues 179–219 (NRFP…KPRH), 446–510 (KAAE…PAVI), and 568–637 (VSPP…ASED). Arginine 180 is modified (omega-N-methylarginine). Residue lysine 215 is modified to N6-acetyllysine; by KAT8. Composition is skewed to low complexity over residues 447 to 468 (AAEA…EQAP) and 482 to 492 (AETPEATTQQE). The residue at position 454 (threonine 454) is a Phosphothreonine; by ATM, ATR and CK2. Position 484 is a phosphothreonine (threonine 484). Serine 569 is modified (phosphoserine). A compositionally biased stretch (basic and acidic residues) spans 572–597 (EPEKEEAAKEEEAIKEEVVKEPKDEA). Lysine 586 participates in a covalent cross-link: Glycyl lysine isopeptide (Lys-Gly) (interchain with G-Cter in SUMO2 and SUMO3); alternate. Lysine 586 is covalently cross-linked (Glycyl lysine isopeptide (Lys-Gly) (interchain with G-Cter in SUMO2); alternate). An interaction with MCC region spans residues 605-665 (ESEAPLKEDG…EEFAGAKLED (61 aa)). Serine 622, serine 670, serine 673, serine 676, serine 682, and serine 803 each carry phosphoserine. The tract at residues 699 to 918 (DCLLAFVFFD…VEKEEPAPSN (220 aa)) is interaction with NR1D1. The stretch at 824-904 (LENRIHTLEL…QLEIQRVVEK (81 aa)) forms a coiled coil. Position 892 is a phosphothreonine (threonine 892).

As to quaternary structure, component of the DBIRD complex. Interacts with ZNF326/ZIRD; the interaction is direct. Interacts (via N-terminus) with SIRT1, which inhibits the deacetylation of substrates. Interacts (via N-terminus) with SUV39H1; this interaction abolishes the interaction with SIRT1. Component of a nuclear receptor-mediated transcription complex composed of at least ZNF335, CCAR2 and EMSY; the complex stimulates the transcription of nuclear receptor target genes such as SOX9 and HOXA1. Within the complex interacts with EMSY and interacts with ZNF335 (via C-terminus). Components of this complex may associate with components of a histone methylation complex to form a complex at least composed of ZNF335, HCFC1, CCAR2, EMSY, MKI67, RBBP5, ASH2L and WDR5. Within this complex, interacts with ASH2L. Interacts with NR1D1. Interacts (via N-terminus) with ESR1 and ESR2. Interacts (via N-terminus) with HDAC3 (via C-terminus). Interacts with HDAC1 and MED2F. Interacts with MCC. Interacts (via N-terminus) with NR1H2 and NR1H3 in a ligand-independent manner. Interacts with CSNK2A1. Interacts (via N-terminus) with p53/TP53. Interacts (via N-terminus) with BRCA1 (via the BRCT domains). Interacts (via N-terminus) with CHEK2 (via protein kinase domain). Interacts with PSEM3. Interacts (via N-terminus) with PSIA3 and SENP1. The sumoylated form shows a preferential interaction with SIRT1 as compared to its unmodified form. Interacts with CECR2; may form part of the CERF-1 and/or CEF-5 ISWI chromatin remodeling complexes in embryonic stem cells. ATM/ATR-mediated phosphorylation at Thr-454 upon DNA damage promotes binding to SIRT1. Phosphorylation at Thr-454 promotes its sumoylation by switching the binding partner of CCAR2 from SENP1 to PIAS3. In terms of processing, acetylation at Lys-112 and Lys-215 by KAT8 prevents inhibitory binding to SIRT1 and increases its deacetylase activity. Post-translationally, genotoxic stress induces its sumoylation and sumoylation promotes the SIRT1-CCAR2 interaction which in turn inhibits SIRT1-mediated deacetylation of p53/TP53. Sumoylation leads to transcriptional activation of p53/TP53 by sequestering SIRT1 from p53/TP53. Desumoylated by SENP1.

The protein localises to the nucleus. Its subcellular location is the cytoplasm. It localises to the cytoskeleton. The protein resides in the spindle. Functionally, core component of the DBIRD complex, a multiprotein complex that acts at the interface between core mRNP particles and RNA polymerase II (RNAPII) and integrates transcript elongation with the regulation of alternative splicing: the DBIRD complex affects local transcript elongation rates and alternative splicing of a large set of exons embedded in (A + T)-rich DNA regions. Inhibits SIRT1 deacetylase activity leading to increasing levels of p53/TP53 acetylation and p53-mediated apoptosis. Inhibits SUV39H1 methyltransferase activity. Mediates ligand-dependent transcriptional activation by nuclear hormone receptors. Plays a critical role in maintaining genomic stability and cellular integrity following UV-induced genotoxic stress. Regulates the circadian expression of the core clock components NR1D1 and BMAL1. Enhances the transcriptional repressor activity of NR1D1 through stabilization of NR1D1 protein levels by preventing its ubiquitination and subsequent degradation. Represses the ligand-dependent transcriptional activation function of ESR2. Acts as a regulator of PCK1 expression and gluconeogenesis by a mechanism that involves, at least in part, both NR1D1 and SIRT1. Negatively regulates the deacetylase activity of HDAC3 and can alter its subcellular localization. Positively regulates the beta-catenin pathway (canonical Wnt signaling pathway) and is required for MCC-mediated repression of the beta-catenin pathway. Represses ligand-dependent transcriptional activation function of NR1H2 and NR1H3 and inhibits the interaction of SIRT1 with NR1H3. Plays an important role in tumor suppression through p53/TP53 regulation; stabilizes p53/TP53 by affecting its interaction with ubiquitin ligase MDM2. Represses the transcriptional activator activity of BRCA1. Inhibits SIRT1 in a CHEK2 and PSEM3-dependent manner and inhibits the activity of CHEK2 in vitro. This chain is Cell cycle and apoptosis regulator protein 2 (CCAR2), found in Pongo abelii (Sumatran orangutan).